The following is a 518-amino-acid chain: Nif-specific regulatory protein (518 aa).

The region spanning 35–176 (NTARALAAIL…MVANLISQPL (142 aa)) is the GAF domain. Positions 205-432 (VGKSQAMRQT…LENCLERASV (228 aa)) constitute a Sigma-54 factor interaction domain. Residues 232–239 (GESGTGKE) and 295–304 (ADGGTLFLDE) each bind ATP. An inter-domain linker region spans residues 433-475 (MTDEGLIDRDVILFNHHESPALSVKPGLPLATDESWLDQELDE). The interval 476-518 (RQRVIAALEKTGWVQAKAARLLGMTPRQIAYRIQIMDINMHRI) is C-terminal DNA-binding domain. Positions 490–509 (QAKAARLLGMTPRQIAYRIQ) form a DNA-binding region, H-T-H motif.

Interacts with sigma-54.

Its function is as follows. Required for activation of most nif operons, which are directly involved in nitrogen fixation. This chain is Nif-specific regulatory protein (nifA), found in Enterobacter agglomerans (Erwinia herbicola).